The primary structure comprises 628 residues: Alpha pinene synthase, chloroplastic (628 aa).

Residues 1 to 46 (MSLGCITPLASAMVGPKLVRPLIHHNPLFHHKPLNRPYLQTKIPLR) constitute a chloroplast transit peptide. Mg(2+) contacts are provided by Asp-381, Asp-385, and Glu-532. Positions 381–385 (DDMYD) match the DDXXD motif motif.

Belongs to the terpene synthase family. Tpsa subfamily. Mg(2+) serves as cofactor. It depends on Mn(2+) as a cofactor.

The protein localises to the plastid. Its subcellular location is the chloroplast. The catalysed reaction is (2E)-geranyl diphosphate = alpha-pinene + diphosphate. The protein operates within secondary metabolite biosynthesis; terpenoid biosynthesis. Monoterpene synthase involved in the biosynthesis of volatile compounds. Mediates the conversion of (2E)-geranyl diphosphate (GPP) into alpha-pinene. This Chamaecyparis formosensis (Formosan cypress) protein is Alpha pinene synthase, chloroplastic.